We begin with the raw amino-acid sequence, 515 residues long: Serine--tRNA ligase, cytoplasmic (515 aa).

The segment at 9-61 (RTDKGGDPEIIRETQRKRFKDVSLVDKLVQADTEWRKCRFTADNLNKAKNLCS) is interaction with tRNA. Residues Thr271 and Arg302 each coordinate L-serine. ATP is bound by residues 302-304 (RQE) and 318-321 (VHQF). An L-serine-binding site is contributed by Glu325. 391 to 394 (ELVS) contacts ATP. L-serine is bound at residue Asn427. Residues 475-515 (PIDQETTKKQKKQQEGGKKKKHQGGDADLENKVENMSVNDS) form a disordered region. The segment covering 479-507 (ETTKKQKKQQEGGKKKKHQGGDADLENKV) has biased composition (basic and acidic residues). Positions 482 to 494 (KKQKKQQEGGKKK) match the Nuclear localization signal motif.

Belongs to the class-II aminoacyl-tRNA synthetase family. Type-1 seryl-tRNA synthetase subfamily.

The protein localises to the cytoplasm. It is found in the nucleus. The catalysed reaction is tRNA(Ser) + L-serine + ATP = L-seryl-tRNA(Ser) + AMP + diphosphate + H(+). It catalyses the reaction tRNA(Sec) + L-serine + ATP = L-seryl-tRNA(Sec) + AMP + diphosphate + H(+). Functionally, catalyzes the attachment of serine to tRNA(Ser) in a two-step reaction: serine is first activated by ATP to form Ser-AMP and then transferred to the acceptor end of tRNA(Ser). Is probably also able to aminoacylate tRNA(Sec) with serine, to form the misacylated tRNA L-seryl-tRNA(Sec), which will be further converted into selenocysteinyl-tRNA(Sec). In the nucleus, binds to the vegfa core promoter and prevents myc binding and transcriptional activation by myc. Thereby inhibits the production of vegfa and sprouting angiogenesis mediated by vegfa. The chain is Serine--tRNA ligase, cytoplasmic (sars1) from Danio rerio (Zebrafish).